A 119-amino-acid polypeptide reads, in one-letter code: DNA-binding protein inhibitor ID-3 (119 aa).

A bHLH domain is found at 28 to 80 (RGKSPSTEEPLSLLDDMNHCYSRLRELVPGVPRGTQLSQVEILQRVIDYILDL). Residues 35 to 87 (EEPLSLLDDMNHCYSRLRELVPGVPRGTQLSQVEILQRVIDYILDLQVVLAEP) form an interaction with IFI204 region.

In terms of assembly, homodimer, and heterodimer with other HLH proteins. Interacts with CLOCK and BMAL1. Interacts with COPS5 and COPS7A. Interacts with IFI204. Interacts with GATA4 and NKX2-5. Interacts with ANKRD2; both proteins cooperate in myoblast differentiation. In terms of processing, polyubiquitinated; which is favored by Ifi204 and leads to proteasomal degradation. In terms of tissue distribution, expressed by myoblasts (at protein level).

Its subcellular location is the nucleus. It localises to the cytoplasm. Functionally, transcriptional regulator (lacking a basic DNA binding domain) which negatively regulates the basic helix-loop-helix (bHLH) transcription factors by forming heterodimers and inhibiting their DNA binding and transcriptional activity. Implicated in regulating a variety of cellular processes, including cellular growth, senescence, differentiation, apoptosis, angiogenesis, and neoplastic transformation. Involved in myogenesis by inhibiting skeletal muscle and cardiac myocyte differentiation and promoting muscle precursor cells proliferation. Inhibits the binding of E2A-containing protein complexes to muscle creatine kinase E-box enhancer. Regulates the circadian clock by repressing the transcriptional activator activity of the CLOCK-BMAL1 heterodimer. The polypeptide is DNA-binding protein inhibitor ID-3 (Id3) (Mus musculus (Mouse)).